Consider the following 84-residue polypeptide: Mitochondrial import inner membrane translocase subunit Tim9 (84 aa).

Positions C28–C52 match the Twin CX3C motif motif. 2 disulfide bridges follow: C28/C52 and C32/C48.

This sequence belongs to the small Tim family. Heterohexamer; composed of 3 copies of TIMM9 and 3 copies of TIMM10/TIM10A, named soluble 70 kDa complex. The complex forms a 6-bladed alpha-propeller structure and associates with the TIMM22 component of the TIM22 complex. Interacts with multi-pass transmembrane proteins in transit.

The protein resides in the mitochondrion inner membrane. In terms of biological role, mitochondrial intermembrane chaperone that participates in the import and insertion of multi-pass transmembrane proteins into the mitochondrial inner membrane. May also be required for the transfer of beta-barrel precursors from the TOM complex to the sorting and assembly machinery (SAM complex) of the outer membrane. Acts as a chaperone-like protein that protects the hydrophobic precursors from aggregation and guide them through the mitochondrial intermembrane space. This is Mitochondrial import inner membrane translocase subunit Tim9 (timm9) from Danio rerio (Zebrafish).